The following is a 96-amino-acid chain: Large ribosomal subunit protein eL21 (96 aa).

The protein belongs to the eukaryotic ribosomal protein eL21 family.

The chain is Large ribosomal subunit protein eL21 from Methanoregula boonei (strain DSM 21154 / JCM 14090 / 6A8).